Reading from the N-terminus, the 90-residue chain is Small ribosomal subunit protein bS16 (90 aa).

It belongs to the bacterial ribosomal protein bS16 family.

The protein is Small ribosomal subunit protein bS16 of Lactococcus lactis subsp. cremoris (strain MG1363).